The following is a 929-amino-acid chain: Probable LRR receptor-like serine/threonine-protein kinase At1g67720 (929 aa).

The signal sequence occupies residues 1-21 (MGLCLAQLAVTCLFLVPFVLS). Over 22–531 (QVTEFVSIDC…NEAQRKHFWQ (510 aa)) the chain is Extracellular. 7 N-linked (GlcNAc...) asparagine glycosylation sites follow: asparagine 36, asparagine 173, asparagine 236, asparagine 293, asparagine 320, asparagine 332, and asparagine 407. LRR repeat units follow at residues 413–437 (PPRV…INYM), 438–460 (EALT…MSKL), 461–484 (VNLK…LAHL), and 485–508 (PNLQ…LLKG). N-linked (GlcNAc...) asparagine glycosylation is present at asparagine 494. A helical transmembrane segment spans residues 532 to 552 (ILGISIAAVAILLLLVGGSLV). The Cytoplasmic portion of the chain corresponds to 553-929 (LLCALRKTKR…SRNSLAPAAR (377 aa)). The Protein kinase domain maps to 606-880 (DNFSKKVGRG…EVIVAIQDAI (275 aa)). ATP is bound by residues 612-620 (VGRGSFGSV) and lysine 634. Tyrosine 679 bears the Phosphotyrosine mark. Residue aspartate 731 is the Proton acceptor of the active site. Phosphoserine is present on residues serine 735 and serine 764. Position 770 is a phosphothreonine (threonine 770). Phosphotyrosine is present on tyrosine 778.

The protein belongs to the protein kinase superfamily. Ser/Thr protein kinase family.

The protein localises to the membrane. The catalysed reaction is L-seryl-[protein] + ATP = O-phospho-L-seryl-[protein] + ADP + H(+). The enzyme catalyses L-threonyl-[protein] + ATP = O-phospho-L-threonyl-[protein] + ADP + H(+). In Arabidopsis thaliana (Mouse-ear cress), this protein is Probable LRR receptor-like serine/threonine-protein kinase At1g67720.